The following is a 275-amino-acid chain: 3-deoxy-manno-octulosonate cytidylyltransferase (275 aa).

The protein belongs to the KdsB family.

The protein localises to the cytoplasm. It carries out the reaction 3-deoxy-alpha-D-manno-oct-2-ulosonate + CTP = CMP-3-deoxy-beta-D-manno-octulosonate + diphosphate. The protein operates within nucleotide-sugar biosynthesis; CMP-3-deoxy-D-manno-octulosonate biosynthesis; CMP-3-deoxy-D-manno-octulosonate from 3-deoxy-D-manno-octulosonate and CTP: step 1/1. Its pathway is bacterial outer membrane biogenesis; lipopolysaccharide biosynthesis. Its function is as follows. Activates KDO (a required 8-carbon sugar) for incorporation into bacterial lipopolysaccharide in Gram-negative bacteria. This chain is 3-deoxy-manno-octulosonate cytidylyltransferase, found in Psychrobacter sp. (strain PRwf-1).